Reading from the N-terminus, the 863-residue chain is Alanine--tRNA ligase (863 aa).

Zn(2+) contacts are provided by histidine 552, histidine 556, cysteine 654, and histidine 658.

This sequence belongs to the class-II aminoacyl-tRNA synthetase family. Zn(2+) is required as a cofactor.

Its subcellular location is the cytoplasm. It carries out the reaction tRNA(Ala) + L-alanine + ATP = L-alanyl-tRNA(Ala) + AMP + diphosphate. In terms of biological role, catalyzes the attachment of alanine to tRNA(Ala) in a two-step reaction: alanine is first activated by ATP to form Ala-AMP and then transferred to the acceptor end of tRNA(Ala). Also edits incorrectly charged Ser-tRNA(Ala) and Gly-tRNA(Ala) via its editing domain. The polypeptide is Alanine--tRNA ligase (Nitrosomonas europaea (strain ATCC 19718 / CIP 103999 / KCTC 2705 / NBRC 14298)).